Reading from the N-terminus, the 124-residue chain is MVKLTSIAAGVAAIAAGVAAAPATTTLSPSDERVNLVELGVYVSDIRAHLAEYYMFQAAHPTETYPVEIAEAVFNYGDFTTMLTGIPADQVTRVITGVPWYSTRLRPAISSALSADGIYTAVPN.

The signal sequence occupies residues 1–20 (MVKLTSIAAGVAAIAAGVAA).

The protein belongs to the SRP1/TIP1 family. Seripauperin subfamily.

This is Seripauperin-17 (PAU17) from Saccharomyces cerevisiae (strain ATCC 204508 / S288c) (Baker's yeast).